Reading from the N-terminus, the 447-residue chain is UPF0210 protein LEUM_1180 (447 aa).

It belongs to the UPF0210 family. Homodimer.

The sequence is that of UPF0210 protein LEUM_1180 from Leuconostoc mesenteroides subsp. mesenteroides (strain ATCC 8293 / DSM 20343 / BCRC 11652 / CCM 1803 / JCM 6124 / NCDO 523 / NBRC 100496 / NCIMB 8023 / NCTC 12954 / NRRL B-1118 / 37Y).